A 291-amino-acid chain; its full sequence is MKSEAKDGEEESLQTAFKKLRVDASGSIVSLSVGEGTSVRASVRTTVDDTKPKTMCAPKDSWHGSTRKSSRGAVRIQRRRRSKSPVLHPPKFIHCSTTASPSSSQLKQRSQTEPLDGSSGRGISTPKEFSTGENSTSLDINHTGAAIEPLRSSVLRLPSESKTEELSDATQVSPESLTANDLSDFQSVSKLSQGKPCVCVGKACQCKRWHDMEVYSFSGLQNVPPLAPERRSLEDYSQSLHTRTLSGSPRSCSEQARVYVDDVTIEDLAGYMEYYLYIPKKMSHMAEMMYT.

The disordered stretch occupies residues 44–139 (RTTVDDTKPK…STGENSTSLD (96 aa)). Positions 65-83 (STRKSSRGAVRIQRRRRSK) are enriched in basic residues. Polar residues-rich tracts occupy residues 95–113 (CSTT…SQTE) and 127–139 (KEFS…TSLD). Position 143 is a phosphothreonine (Thr143).

Ubiquitous with high level in testis, placenta and cardiac myocytes. In terms of tissue distribution, expressed in testis, unpreganant uterus and cardiac myocytes.

This chain is Oxidative stress-responsive serine-rich protein 1 (Oser1), found in Rattus norvegicus (Rat).